We begin with the raw amino-acid sequence, 194 residues long: uncharacterized protein (194 aa).

The first 24 residues, 1 to 24 (MRKFVAFFVIVALAALLAGCGGQG), serve as a signal peptide directing secretion.

This is an uncharacterized protein from Archaeoglobus fulgidus (strain ATCC 49558 / DSM 4304 / JCM 9628 / NBRC 100126 / VC-16).